Consider the following 388-residue polypeptide: Processive diacylglycerol beta-glucosyltransferase (388 aa).

Belongs to the glycosyltransferase 28 family. UgtP subfamily.

Its subcellular location is the cell membrane. It carries out the reaction a 1,2-diacyl-3-O-(beta-D-glucopyranosyl)-sn-glycerol + UDP-alpha-D-glucose = a 1,2-diacyl-3-O-(beta-D-Glc-(1-&gt;6)-beta-D-Glc)-sn-glycerol + UDP + H(+). The catalysed reaction is a 1,2-diacyl-3-O-(beta-D-Glc-(1-&gt;6)-beta-D-Glc)-sn-glycerol + UDP-alpha-D-glucose = a 1,2-diacyl-3-O-(beta-D-Glc-(1-&gt;6)-beta-D-Glc-(1-&gt;6)-beta-D-Glc)-sn-glycerol + UDP + H(+). The enzyme catalyses a 1,2-diacyl-sn-glycerol + UDP-alpha-D-glucose = a 1,2-diacyl-3-O-(beta-D-glucopyranosyl)-sn-glycerol + UDP + H(+). Its pathway is glycolipid metabolism; diglucosyl-diacylglycerol biosynthesis. Functionally, processive glucosyltransferase involved in the biosynthesis of both the bilayer- and non-bilayer-forming membrane glucolipids. Is able to successively transfer up to three glucosyl residues to diacylglycerol (DAG), thereby catalyzing the formation of beta-monoglucosyl-DAG (3-O-(beta-D-glucopyranosyl)-1,2-diacyl-sn-glycerol), beta-diglucosyl-DAG (3-O-(beta-D-glucopyranosyl-beta-(1-&gt;6)-D-glucopyranosyl)-1,2-diacyl-sn-glycerol) and beta-triglucosyl-DAG (3-O-(beta-D-glucopyranosyl-beta-(1-&gt;6)-D-glucopyranosyl-beta-(1-&gt;6)-D-glucopyranosyl)-1,2-diacyl-sn-glycerol). Beta-diglucosyl-DAG is the predominant glycolipid found in Bacillales and is also used as a membrane anchor for lipoteichoic acid (LTA). This Bacillus cereus (strain B4264) protein is Processive diacylglycerol beta-glucosyltransferase.